A 371-amino-acid polypeptide reads, in one-letter code: Interstrand DNA cross-link repair glycosylase (371 aa).

A QXQ; important for activity motif is present at residues 37-39 (QAQ).

It belongs to the DNA glycosylase AlkZ-like family.

In terms of biological role, DNA glycosylase involved in the repair of interstrand DNA cross-links (ICLs), which are highly toxic DNA lesions that covalently tether the opposing strands of DNA, thereby inhibiting essential cellular processes such as DNA replication and transcription. Acts by unhooking both sides of the ICLs, forming abasic (AP) sites on both strands. AlkZ specifically repairs DNA damage induced by azinomycin B (AZB), a natural product with potent antibiotic and antitumor activities that interacts covalently with duplex DNA and forms ICLs. AlkZ thus confers self-resistance to azinomycin B, which is produced by S.sahachiroi. It may also protect target sites by protein-DNA interaction. Binds sequence non-specifically to native DNA and structure-specifically to azinomycin B-modified sites, with higher affinity to azinomycin B-modified sites and lower affinity to native DNA duplex. In vitro, also acts on monoadducts and can catalyze the excision of N7-methylguanine (7mGua) from an oligonucleotide containing N7-methyldeoxyguanosine (d7mG). Is a monofunctional DNA glycosylase that does not have lyase activity. This is Interstrand DNA cross-link repair glycosylase from Streptomyces sahachiroi.